Reading from the N-terminus, the 607-residue chain is MNDVSQKAEIKEMLASDDEEESSPKIEKAYVPKLTGTVKGKFDEMEKHRQEEQRKRTEEERKRRIEQDLLEKRKIQRELAKRAEQIEDINNTGTESASEEGDDSLLITVVPAKSYKTPGKTKDPEDLDREEGNGRTNHEEDKMRYEEECRVLKEAKCLSLVMDDETEAKKESHFPGKLKSTFEELERQRQENRKKQAEEEARRRLEEERRSFEEARRHMVNEEDENQDRETVFKEYRPGKLKLSFEEIERQRREDEKRKAEEEARRRIEEEKAAFAEARRSMVLDDDSPEIYKTVSQESLTPGKLEINFEQLLRQKMEEERRRTEEERRHKLEMEKQEFEQLRQEMGKEEEENESFGLSREYEELIKLKRSGSIQAKNLKSKFEKIGQLSEKEVQKKIEEERAKRRAIDLEIKEREAENFHEDDDVDVRPAKKSESPFTHKVNMKARFEQMAKAREEEEQRRIEEQKLLRMQFEQKEIDAALQKKREDEEEEEGSIVNGSTTEDEEQTRSGAPWFKKPLRNTSVVDSEPVRFTVKVTGEPKPEITWWFEGEILQDGEDYQYIERGETYCLYLPETFPEDGGEYMCKAVNNKGSAASTCILTIEMDDY.

Residues 1–14 show a composition bias toward basic and acidic residues; that stretch reads MNDVSQKAEIKEML. Disordered stretches follow at residues 1–143 and 165–268; these read MNDV…EDKM and ETEA…RRRI. At Ser16 the chain carries Phosphoserine. 4 stretches are compositionally biased toward basic and acidic residues: residues 40–85, 120–143, 167–221, and 228–268; these read GKFD…RAEQ, KTKD…EDKM, EAKK…HMVN, and DRET…RRRI. A Phosphoserine modification is found at Ser172. Residues Ser281, Ser288, and Ser296 each carry the phosphoserine modification. Thr301 carries the phosphothreonine modification. Disordered regions lie at residues 419–444 and 480–514; these read NFHE…KVNM and AALQ…GAPW. 2 positions are modified to phosphoserine: Ser495 and Ser500. Thr502 bears the Phosphothreonine mark. The Ig-like domain maps to 513–601; sequence PWFKKPLRNT…GSAASTCILT (89 aa).

Interacts with F-actin.

The protein localises to the cytoplasm. It localises to the cytoskeleton. The protein resides in the cell junction. Its subcellular location is the adherens junction. It is found in the myofibril. The protein localises to the sarcomere. It localises to the z line. Functionally, involved in regulating cell migration through association with the actin cytoskeleton. Has an essential role in the maintenance of Z line and sarcomere integrity. The chain is Nexilin from Mus musculus (Mouse).